An 871-amino-acid chain; its full sequence is Probable receptor-like protein kinase At2g21480 (871 aa).

Residues Met1–Ala39 form the signal peptide. Residues Val40–Gly439 lie on the Extracellular side of the membrane. 5 N-linked (GlcNAc...) asparagine glycosylation sites follow: Asn169, Asn182, Asn253, Asn316, and Asn381. The helical transmembrane segment at Met440–Val460 threads the bilayer. Residues Tyr461–Arg871 lie on the Cytoplasmic side of the membrane. In terms of domain architecture, Protein kinase spans Phe525–Ala797. Residues Ile531–Val539 and Lys553 contribute to the ATP site. The Proton acceptor role is filled by Asp649. The tract at residues Lys808–Arg871 is disordered. Residues Pro817–Glu839 are compositionally biased toward low complexity. Over residues Asp854–Arg871 the composition is skewed to polar residues.

This sequence belongs to the protein kinase superfamily. Ser/Thr protein kinase family.

It localises to the membrane. This is Probable receptor-like protein kinase At2g21480 from Arabidopsis thaliana (Mouse-ear cress).